The primary structure comprises 493 residues: Glutamate--tRNA ligase (493 aa).

The 'HIGH' region signature appears at proline 9–serine 19. Residues lysine 258–arginine 262 carry the 'KMSKS' region motif. Residue lysine 261 coordinates ATP.

It belongs to the class-I aminoacyl-tRNA synthetase family. Glutamate--tRNA ligase type 1 subfamily. Monomer.

Its subcellular location is the cytoplasm. The enzyme catalyses tRNA(Glu) + L-glutamate + ATP = L-glutamyl-tRNA(Glu) + AMP + diphosphate. In terms of biological role, catalyzes the attachment of glutamate to tRNA(Glu) in a two-step reaction: glutamate is first activated by ATP to form Glu-AMP and then transferred to the acceptor end of tRNA(Glu). In Clostridioides difficile (strain 630) (Peptoclostridium difficile), this protein is Glutamate--tRNA ligase.